A 239-amino-acid chain; its full sequence is Protein NtpR (239 aa).

The 228-residue stretch at 12-239 (LIRATDTFQG…GLFDFFVQEF (228 aa)) folds into the Glutamine amidotransferase type-1 domain. The active-site Nucleophile is cysteine 113. Active-site residues include histidine 217 and glutamate 219.

The chain is Protein NtpR (ntpR) from Enterococcus hirae (strain ATCC 9790 / DSM 20160 / JCM 8729 / LMG 6399 / NBRC 3181 / NCIMB 6459 / NCDO 1258 / NCTC 12367 / WDCM 00089 / R).